The chain runs to 88 residues: Small ribosomal subunit protein bS20 (88 aa).

Residues 1 to 20 form a disordered region; sequence MANTAQARKRARQAVVQNAH.

It belongs to the bacterial ribosomal protein bS20 family.

Binds directly to 16S ribosomal RNA. This is Small ribosomal subunit protein bS20 from Ralstonia pickettii (strain 12J).